Reading from the N-terminus, the 115-residue chain is Cytochrome c oxidase assembly protein COX16 homolog, mitochondrial (115 aa).

Over 1-6 (MSRLKF) the chain is Mitochondrial matrix. The chain crosses the membrane as a helical span at residues 7–29 (VRVGLPFFAIVLGSAYGLHFFQQ). Topologically, residues 30–115 (VRFDFRKIKQ…RKVRELKSNV (86 aa)) are mitochondrial intermembrane.

It belongs to the COX16 family.

The protein localises to the mitochondrion inner membrane. Its function is as follows. Required for the assembly of the mitochondrial respiratory chain complex IV (CIV), also known as cytochrome c oxidase. This is Cytochrome c oxidase assembly protein COX16 homolog, mitochondrial from Caenorhabditis elegans.